The sequence spans 71 residues: MGRVKPKYIKSLAEKLLETYPDRFTDSFEENKKAVAELAEIPSKTVRNKVAGYITRLIKRRKAQEKAETAA.

Belongs to the eukaryotic ribosomal protein eS17 family.

The sequence is that of Small ribosomal subunit protein eS17 from Pyrobaculum arsenaticum (strain DSM 13514 / JCM 11321 / PZ6).